The following is a 551-amino-acid chain: Glucans biosynthesis protein D (551 aa).

Positions Met-1–Ala-32 form a signal peptide, tat-type signal.

Belongs to the OpgD/OpgG family. Predicted to be exported by the Tat system. The position of the signal peptide cleavage has not been experimentally proven.

It is found in the periplasm. Its pathway is glycan metabolism; osmoregulated periplasmic glucan (OPG) biosynthesis. Probably involved in the control of the structural glucose backbone of osmoregulated periplasmic glucans (OPGs). This is Glucans biosynthesis protein D from Escherichia coli O127:H6 (strain E2348/69 / EPEC).